Reading from the N-terminus, the 227-residue chain is 2-C-methyl-D-erythritol 4-phosphate cytidylyltransferase (227 aa).

Belongs to the IspD/TarI cytidylyltransferase family. IspD subfamily.

It carries out the reaction 2-C-methyl-D-erythritol 4-phosphate + CTP + H(+) = 4-CDP-2-C-methyl-D-erythritol + diphosphate. It functions in the pathway isoprenoid biosynthesis; isopentenyl diphosphate biosynthesis via DXP pathway; isopentenyl diphosphate from 1-deoxy-D-xylulose 5-phosphate: step 2/6. In terms of biological role, catalyzes the formation of 4-diphosphocytidyl-2-C-methyl-D-erythritol from CTP and 2-C-methyl-D-erythritol 4-phosphate (MEP). This is 2-C-methyl-D-erythritol 4-phosphate cytidylyltransferase from Petrotoga mobilis (strain DSM 10674 / SJ95).